Here is a 261-residue protein sequence, read N- to C-terminus: Imidazole glycerol phosphate synthase subunit HisF (261 aa).

Active-site residues include Asp-12 and Asp-131.

This sequence belongs to the HisA/HisF family. Heterodimer of HisH and HisF.

Its subcellular location is the cytoplasm. The catalysed reaction is 5-[(5-phospho-1-deoxy-D-ribulos-1-ylimino)methylamino]-1-(5-phospho-beta-D-ribosyl)imidazole-4-carboxamide + L-glutamine = D-erythro-1-(imidazol-4-yl)glycerol 3-phosphate + 5-amino-1-(5-phospho-beta-D-ribosyl)imidazole-4-carboxamide + L-glutamate + H(+). It functions in the pathway amino-acid biosynthesis; L-histidine biosynthesis; L-histidine from 5-phospho-alpha-D-ribose 1-diphosphate: step 5/9. IGPS catalyzes the conversion of PRFAR and glutamine to IGP, AICAR and glutamate. The HisF subunit catalyzes the cyclization activity that produces IGP and AICAR from PRFAR using the ammonia provided by the HisH subunit. This Brucella abortus (strain S19) protein is Imidazole glycerol phosphate synthase subunit HisF.